A 166-amino-acid chain; its full sequence is Small ribosomal subunit protein uS9 (166 aa).

Residues M1 to E16 show a composition bias toward acidic residues. The interval M1–G45 is disordered.

Belongs to the universal ribosomal protein uS9 family.

In Nocardioides sp. (strain ATCC BAA-499 / JS614), this protein is Small ribosomal subunit protein uS9.